We begin with the raw amino-acid sequence, 231 residues long: Phosphoglycolate phosphatase (231 aa).

Asp9 functions as the Nucleophile in the catalytic mechanism. Positions 9 and 11 each coordinate Mg(2+). Lys154 is a substrate binding site. Mg(2+) contacts are provided by Asp177 and Asp181.

This sequence belongs to the archaeal SPP-like hydrolase family. The cofactor is Mg(2+).

It catalyses the reaction 2-phosphoglycolate + H2O = glycolate + phosphate. In terms of biological role, catalyzes the dephosphorylation of 2-phosphoglycolate. The sequence is that of Phosphoglycolate phosphatase from Nitrosopumilus maritimus (strain SCM1).